The sequence spans 133 residues: Cell division protein FtsL (133 aa).

Over 1–45 (MAVEKVYQPYDEQVYNSIPKQQPQTKPEKKTVSRKVVVQLTKFEK) the chain is Cytoplasmic. Residues 46 to 65 (VLYITLITVIAMLSIYMLSL) traverse the membrane as a helical segment. Topologically, residues 66–133 (KMDAYDTRGK…VVRSNGEAKN (68 aa)) are extracellular.

The protein belongs to the FtsL family.

The protein localises to the cell membrane. Essential cell division protein. This is Cell division protein FtsL from Staphylococcus aureus (strain NCTC 8325 / PS 47).